Here is a 198-residue protein sequence, read N- to C-terminus: Glycerol-3-phosphate acyltransferase (198 aa).

5 helical membrane-spanning segments follow: residues 1–21, 77–97, 111–131, 136–156, and 157–177; these read MTII…GFLF, HLFE…PIWL, MFIA…LIIL, IVSL…FLDI, and GVTN…VILK.

It belongs to the PlsY family. As to quaternary structure, probably interacts with PlsX.

Its subcellular location is the cell inner membrane. It catalyses the reaction an acyl phosphate + sn-glycerol 3-phosphate = a 1-acyl-sn-glycero-3-phosphate + phosphate. Its pathway is lipid metabolism; phospholipid metabolism. Functionally, catalyzes the transfer of an acyl group from acyl-phosphate (acyl-PO(4)) to glycerol-3-phosphate (G3P) to form lysophosphatidic acid (LPA). This enzyme utilizes acyl-phosphate as fatty acyl donor, but not acyl-CoA or acyl-ACP. The polypeptide is Glycerol-3-phosphate acyltransferase (Prochlorococcus marinus (strain MIT 9515)).